Consider the following 93-residue polypeptide: MAKEELIQFEGLVTEILPDARYRVQLDAGHEIVAYTAGKMKKNRIKTLAGDRVTIEMSPYDLEKGRLIFRHKDERPGGGPPRGAPPRGQFRRR.

The S1-like domain occupies 1-72 (MAKEELIQFE…EKGRLIFRHK (72 aa)). Residues 70 to 93 (RHKDERPGGGPPRGAPPRGQFRRR) form a disordered region.

This sequence belongs to the IF-1 family. In terms of assembly, component of the 30S ribosomal translation pre-initiation complex which assembles on the 30S ribosome in the order IF-2 and IF-3, IF-1 and N-formylmethionyl-tRNA(fMet); mRNA recruitment can occur at any time during PIC assembly.

Its subcellular location is the cytoplasm. Functionally, one of the essential components for the initiation of protein synthesis. Stabilizes the binding of IF-2 and IF-3 on the 30S subunit to which N-formylmethionyl-tRNA(fMet) subsequently binds. Helps modulate mRNA selection, yielding the 30S pre-initiation complex (PIC). Upon addition of the 50S ribosomal subunit IF-1, IF-2 and IF-3 are released leaving the mature 70S translation initiation complex. The polypeptide is Translation initiation factor IF-1 (Rhodopseudomonas palustris (strain BisB18)).